The sequence spans 441 residues: Ribulose bisphosphate carboxylase large chain (441 aa).

An N6,N6,N6-trimethyllysine modification is found at lysine 4. Asparagine 113 and threonine 163 together coordinate substrate. Residue lysine 165 is the Proton acceptor of the active site. Lysine 167 contacts substrate. The Mg(2+) site is built by lysine 191, aspartate 193, and glutamate 194. N6-carboxylysine is present on lysine 191. Histidine 284 serves as the catalytic Proton acceptor. Substrate contacts are provided by arginine 285, histidine 317, and serine 369.

It belongs to the RuBisCO large chain family. Type I subfamily. Heterohexadecamer of 8 large chains and 8 small chains; disulfide-linked. The disulfide link is formed within the large subunit homodimers. Mg(2+) serves as cofactor. In terms of processing, the disulfide bond which can form in the large chain dimeric partners within the hexadecamer appears to be associated with oxidative stress and protein turnover.

Its subcellular location is the plastid. The protein localises to the chloroplast. It carries out the reaction 2 (2R)-3-phosphoglycerate + 2 H(+) = D-ribulose 1,5-bisphosphate + CO2 + H2O. The catalysed reaction is D-ribulose 1,5-bisphosphate + O2 = 2-phosphoglycolate + (2R)-3-phosphoglycerate + 2 H(+). Functionally, ruBisCO catalyzes two reactions: the carboxylation of D-ribulose 1,5-bisphosphate, the primary event in carbon dioxide fixation, as well as the oxidative fragmentation of the pentose substrate in the photorespiration process. Both reactions occur simultaneously and in competition at the same active site. The chain is Ribulose bisphosphate carboxylase large chain from Heliamphora nutans (Venezuelan marsh pitcher plant).